The primary structure comprises 149 residues: D-aminoacyl-tRNA deacylase (149 aa).

Positions 137 to 138 match the Gly-cisPro motif, important for rejection of L-amino acids motif; the sequence is GP.

The protein belongs to the DTD family. As to quaternary structure, homodimer.

The protein localises to the cytoplasm. It catalyses the reaction glycyl-tRNA(Ala) + H2O = tRNA(Ala) + glycine + H(+). The catalysed reaction is a D-aminoacyl-tRNA + H2O = a tRNA + a D-alpha-amino acid + H(+). An aminoacyl-tRNA editing enzyme that deacylates mischarged D-aminoacyl-tRNAs. Also deacylates mischarged glycyl-tRNA(Ala), protecting cells against glycine mischarging by AlaRS. Acts via tRNA-based rather than protein-based catalysis; rejects L-amino acids rather than detecting D-amino acids in the active site. By recycling D-aminoacyl-tRNA to D-amino acids and free tRNA molecules, this enzyme counteracts the toxicity associated with the formation of D-aminoacyl-tRNA entities in vivo and helps enforce protein L-homochirality. The sequence is that of D-aminoacyl-tRNA deacylase from Paracoccus denitrificans (strain Pd 1222).